The primary structure comprises 101 residues: NADH-quinone oxidoreductase subunit K (101 aa).

A run of 3 helical transmembrane segments spans residues 4–24, 30–50, and 61–81; these read LAHYLVLGAILFAISIVGIFL, IIILMAIELMLLAVNTNFVAF, and IFVFFVLTVAAAEAAIGLAIL.

This sequence belongs to the complex I subunit 4L family. As to quaternary structure, NDH-1 is composed of 14 different subunits. Subunits NuoA, H, J, K, L, M, N constitute the membrane sector of the complex.

It is found in the cell inner membrane. The enzyme catalyses a quinone + NADH + 5 H(+)(in) = a quinol + NAD(+) + 4 H(+)(out). NDH-1 shuttles electrons from NADH, via FMN and iron-sulfur (Fe-S) centers, to quinones in the respiratory chain. The immediate electron acceptor for the enzyme in this species is believed to be ubiquinone. Couples the redox reaction to proton translocation (for every two electrons transferred, four hydrogen ions are translocated across the cytoplasmic membrane), and thus conserves the redox energy in a proton gradient. The protein is NADH-quinone oxidoreductase subunit K of Paraburkholderia phymatum (strain DSM 17167 / CIP 108236 / LMG 21445 / STM815) (Burkholderia phymatum).